A 309-amino-acid polypeptide reads, in one-letter code: L-lactate dehydrogenase (309 aa).

NAD(+) contacts are provided by residues Val-12, Asp-33, Arg-38, Tyr-63, and Gly-77–Ala-78. Substrate is bound by residues Gln-80, Arg-86, and Asn-118–Asp-121. Residues Ala-116–Asn-118 and Ser-141 contribute to the NAD(+) site. Asp-146–Arg-149 is a binding site for substrate. Residues Arg-151 and His-166 each coordinate beta-D-fructose 1,6-bisphosphate. The active-site Proton acceptor is His-173. A Phosphotyrosine modification is found at Tyr-219. Residue Thr-228 coordinates substrate.

It belongs to the LDH/MDH superfamily. LDH family. Homotetramer.

It is found in the cytoplasm. The enzyme catalyses (S)-lactate + NAD(+) = pyruvate + NADH + H(+). It participates in fermentation; pyruvate fermentation to lactate; (S)-lactate from pyruvate: step 1/1. With respect to regulation, allosterically activated by fructose 1,6-bisphosphate (FBP). Its function is as follows. Catalyzes the conversion of lactate to pyruvate. The polypeptide is L-lactate dehydrogenase (Nitratidesulfovibrio vulgaris (strain ATCC 29579 / DSM 644 / CCUG 34227 / NCIMB 8303 / VKM B-1760 / Hildenborough) (Desulfovibrio vulgaris)).